Reading from the N-terminus, the 235-residue chain is tRNA1(Val) (adenine(37)-N6)-methyltransferase (235 aa).

This sequence belongs to the methyltransferase superfamily. tRNA (adenine-N(6)-)-methyltransferase family.

Its subcellular location is the cytoplasm. It carries out the reaction adenosine(37) in tRNA1(Val) + S-adenosyl-L-methionine = N(6)-methyladenosine(37) in tRNA1(Val) + S-adenosyl-L-homocysteine + H(+). Functionally, specifically methylates the adenine in position 37 of tRNA(1)(Val) (anticodon cmo5UAC). The polypeptide is tRNA1(Val) (adenine(37)-N6)-methyltransferase (Glaesserella parasuis serovar 5 (strain SH0165) (Haemophilus parasuis)).